The primary structure comprises 221 residues: Ras-related protein Rab-27A (221 aa).

S2 is subject to N-acetylserine. S2 is subject to Phosphoserine. 16-24 (GDSGVGKTS) provides a ligand contact to GTP. The Effector region signature appears at 38–46 (FITTVGIDF). GTP contacts are provided by residues 74-78 (DTAGQ), 133-136 (NKSD), and 163-165 (SAA). C123 and C188 are joined by a disulfide. The disordered stretch occupies residues 202 to 221 (NGHTSADPLNEEKEKGSCGC). The span at 211–221 (NEEKEKGSCGC) shows a compositional bias: basic and acidic residues. Residues C219 and C221 are each lipidated (S-geranylgeranyl cysteine). Position 221 is a cysteine methyl ester (C221).

The protein belongs to the small GTPase superfamily. Rab family. As to quaternary structure, binds SYTL1, SLAC2B, MYRIP, SYTL3, SYTL4 and SYTL5. Interacts with RPH3A and RPH3A. Binds MLPH and SYTL2. Interacts with UNC13D. Does not interact with the BLOC-3 complex (heterodimer of HPS1 and HPS4). Interacts (GDP-bound form preferentially) with DENND10.

The protein resides in the membrane. Its subcellular location is the melanosome. The protein localises to the late endosome. It is found in the lysosome. It catalyses the reaction GTP + H2O = GDP + phosphate + H(+). With respect to regulation, regulated by guanine nucleotide exchange factors (GEFs) which promote the exchange of bound GDP for free GTP, GTPase activating proteins (GAPs) which increase the GTP hydrolysis activity, and GDP dissociation inhibitors which inhibit the dissociation of the nucleotide from the GTPase. Activated by GEFs such as DENND10. Functionally, small GTPase which cycles between active GTP-bound and inactive GDP-bound states. In its active state, binds to a variety of effector proteins to regulate homeostasis of late endocytic pathway, including endosomal positioning, maturation and secretion. Plays a role in cytotoxic granule exocytosis in lymphocytes. Required for both granule maturation and granule docking and priming at the immunologic synapse. This is Ras-related protein Rab-27A (RAB27A) from Sus scrofa (Pig).